The sequence spans 648 residues: Rab11 family-interacting protein 1 (648 aa).

The region spanning Met1 to Tyr129 is the C2 domain. Over residues Ser164–Thr188 the composition is skewed to basic and acidic residues. Disordered stretches follow at residues Ser164–Gly470, Val483–Pro503, and Val516–Thr555. Polar residues predominate over residues Ser189–Pro201. Residues Ser205, Ser209, and Ser237 each carry the phosphoserine modification. Composition is skewed to polar residues over residues Pro227–Pro242 and Ser271–Ser296. Residues Ser304, Ser319, Ser343, Ser345, Ser347, Ser349, Ser360, Ser361, and Ser386 each carry the phosphoserine modification. The span at Asp314–Ile323 shows a compositional bias: polar residues. Composition is skewed to basic and acidic residues over residues Ser381–Met394 and Ala422–Lys436. Residue Ser438 is modified to Phosphoserine. The span at Gly445–Glu454 shows a compositional bias: basic and acidic residues. The 63-residue stretch at Lys576–Pro638 folds into the FIP-RBD domain. The necessary for interaction with RAB4A and RAB11A, subcellular location and endosomal recycling stretch occupies residues Ala584–Met648.

Homooligomer. Interacts with RAB11A, RAB11B, RAB25, RAB4A and RAB14.

The protein resides in the recycling endosome. It localises to the cytoplasmic vesicle. A Rab11 effector protein involved in the endosomal recycling process. Also involved in controlling membrane trafficking along the phagocytic pathway and in phagocytosis. Interaction with RAB14 may function in the process of neurite formation. The sequence is that of Rab11 family-interacting protein 1 from Rattus norvegicus (Rat).